We begin with the raw amino-acid sequence, 426 residues long: Histidine--tRNA ligase (426 aa).

This sequence belongs to the class-II aminoacyl-tRNA synthetase family. Homodimer.

The protein resides in the cytoplasm. The catalysed reaction is tRNA(His) + L-histidine + ATP = L-histidyl-tRNA(His) + AMP + diphosphate + H(+). This chain is Histidine--tRNA ligase, found in Corynebacterium kroppenstedtii (strain DSM 44385 / JCM 11950 / CIP 105744 / CCUG 35717).